A 261-amino-acid chain; its full sequence is Na(+)-translocating NADH-quinone reductase subunit C (261 aa).

A helical membrane pass occupies residues 11-31 (LLVALVVCLVSSVFVAGAAVA). T230 is subject to FMN phosphoryl threonine.

Belongs to the NqrC family. In terms of assembly, composed of six subunits; NqrA, NqrB, NqrC, NqrD, NqrE and NqrF. It depends on FMN as a cofactor.

It localises to the cell inner membrane. The catalysed reaction is a ubiquinone + n Na(+)(in) + NADH + H(+) = a ubiquinol + n Na(+)(out) + NAD(+). Functionally, NQR complex catalyzes the reduction of ubiquinone-1 to ubiquinol by two successive reactions, coupled with the transport of Na(+) ions from the cytoplasm to the periplasm. NqrA to NqrE are probably involved in the second step, the conversion of ubisemiquinone to ubiquinol. The sequence is that of Na(+)-translocating NADH-quinone reductase subunit C from Pseudomonas aeruginosa (strain ATCC 15692 / DSM 22644 / CIP 104116 / JCM 14847 / LMG 12228 / 1C / PRS 101 / PAO1).